The chain runs to 340 residues: Thermopsin (340 aa).

The signal sequence occupies residues 1–28 (MNFKSICLIILLSALIIPYIPQNIYFFP). The propeptide occupies 29–41 (HRNTTGATISSGL). N-linked (GlcNAc...) asparagine glycosylation is found at Asn31, Asn65, Asn85, Asn117, Asn148, Asn197, Asn277, Asn287, Asn327, and Asn334.

The protein belongs to the peptidase A5 family.

It localises to the secreted. The catalysed reaction is Specificity similar to pepsin A, prefers bulky hydrophobic side-chains on either side of the scissible bond.. May represent a new class of acid proteases. It digests proteins and peptides in acidic solution. The sequence is that of Thermopsin (thpS) from Sulfolobus acidocaldarius (strain ATCC 33909 / DSM 639 / JCM 8929 / NBRC 15157 / NCIMB 11770).